The chain runs to 307 residues: Protoheme IX farnesyltransferase (307 aa).

9 helical membrane-spanning segments follow: residues 33–53 (IGIV…AFYF), 62–82 (LHIV…SCSI), 111–131 (RVLW…LMTT), 132–152 (VTAA…YTLW), 159–179 (LNTV…WTAV), 185–205 (IVPL…FLAL), 229–249 (MTKR…FYLF), 251–271 (LGIP…LLGL), and 287–307 (FVYS…ATIW).

Belongs to the UbiA prenyltransferase family. Protoheme IX farnesyltransferase subfamily. In terms of assembly, interacts with CtaA.

Its subcellular location is the cell membrane. The enzyme catalyses heme b + (2E,6E)-farnesyl diphosphate + H2O = Fe(II)-heme o + diphosphate. It participates in porphyrin-containing compound metabolism; heme O biosynthesis; heme O from protoheme: step 1/1. Converts heme B (protoheme IX) to heme O by substitution of the vinyl group on carbon 2 of heme B porphyrin ring with a hydroxyethyl farnesyl side group. This chain is Protoheme IX farnesyltransferase, found in Geobacillus thermodenitrificans (strain NG80-2).